Consider the following 579-residue polypeptide: Threonylcarbamoyladenosine tRNA methylthiotransferase (579 aa).

At serine 53 the chain carries Phosphoserine. The 109-residue stretch at 64–172 (QKIWIRTWGC…VVEVVEETIK (109 aa)) folds into the MTTase N-terminal domain. [4Fe-4S] cluster is bound by residues cysteine 73 and cysteine 109. At serine 122 the chain carries Phosphoserine. [4Fe-4S] cluster-binding residues include cysteine 138, cysteine 214, cysteine 218, and cysteine 221. Residues 200–431 (RKNPLIEIIS…RVFHSYSPYD (232 aa)) form the Radical SAM core domain. The TRAM domain occupies 431 to 493 (DHKIGERQQV…KHFMKGQPVS (63 aa)). Position 499 is a phosphothreonine (threonine 499). A helical transmembrane segment spans residues 556–578 (CALRMSVGLALLGLLFAFFVKVY).

It belongs to the methylthiotransferase family. CDKAL1 subfamily. The cofactor is [4Fe-4S] cluster. Expressed in pancreatic islets.

It is found in the endoplasmic reticulum membrane. It catalyses the reaction N(6)-L-threonylcarbamoyladenosine(37) in tRNA + (sulfur carrier)-SH + AH2 + 2 S-adenosyl-L-methionine = 2-methylsulfanyl-N(6)-L-threonylcarbamoyladenosine(37) in tRNA + (sulfur carrier)-H + 5'-deoxyadenosine + L-methionine + A + S-adenosyl-L-homocysteine + 2 H(+). Catalyzes the methylthiolation of N6-threonylcarbamoyladenosine (t(6)A), leading to the formation of 2-methylthio-N6-threonylcarbamoyladenosine (ms(2)t(6)A) at position 37 in tRNAs that read codons beginning with adenine. The protein is Threonylcarbamoyladenosine tRNA methylthiotransferase (CDKAL1) of Homo sapiens (Human).